Consider the following 146-residue polypeptide: Hemoglobin subunit beta (146 aa).

The residue at position 1 (Val-1) is an N-acetylvaline. In terms of domain architecture, Globin spans 2 to 146; that stretch reads HLTPEEKTAV…VANALAHKYH (145 aa). Thr-12 carries the post-translational modification Phosphothreonine. At Ser-44 the chain carries Phosphoserine. Lys-59 is subject to N6-acetyllysine. Heme b is bound at residue His-63. An N6-acetyllysine modification is found at Lys-82. Position 92 (His-92) interacts with heme b. S-nitrosocysteine is present on Cys-93. The residue at position 144 (Lys-144) is an N6-acetyllysine.

The protein belongs to the globin family. As to quaternary structure, heterotetramer of two alpha chains and two beta chains. Red blood cells.

Functionally, involved in oxygen transport from the lung to the various peripheral tissues. The protein is Hemoglobin subunit beta (HBB) of Mandrillus sphinx (Mandrill).